Reading from the N-terminus, the 107-residue chain is Putative pterin-4-alpha-carbinolamine dehydratase (107 aa).

It belongs to the pterin-4-alpha-carbinolamine dehydratase family.

It catalyses the reaction (4aS,6R)-4a-hydroxy-L-erythro-5,6,7,8-tetrahydrobiopterin = (6R)-L-erythro-6,7-dihydrobiopterin + H2O. In Paracoccus denitrificans (strain Pd 1222), this protein is Putative pterin-4-alpha-carbinolamine dehydratase.